A 296-amino-acid polypeptide reads, in one-letter code: Acetylglutamate kinase (296 aa).

Residues 69–70, Arg91, and Asn193 each bind substrate; that span reads GG.

It belongs to the acetylglutamate kinase family. ArgB subfamily.

It is found in the cytoplasm. It carries out the reaction N-acetyl-L-glutamate + ATP = N-acetyl-L-glutamyl 5-phosphate + ADP. It participates in amino-acid biosynthesis; L-arginine biosynthesis; N(2)-acetyl-L-ornithine from L-glutamate: step 2/4. Its function is as follows. Catalyzes the ATP-dependent phosphorylation of N-acetyl-L-glutamate. The protein is Acetylglutamate kinase of Verminephrobacter eiseniae (strain EF01-2).